The chain runs to 858 residues: DNA mismatch repair protein MutS (858 aa).

Residue 613-620 participates in ATP binding; that stretch reads GPNMAGKS.

This sequence belongs to the DNA mismatch repair MutS family.

In terms of biological role, this protein is involved in the repair of mismatches in DNA. It is possible that it carries out the mismatch recognition step. This protein has a weak ATPase activity. The sequence is that of DNA mismatch repair protein MutS from Dehalococcoides mccartyi (strain ATCC BAA-2266 / KCTC 15142 / 195) (Dehalococcoides ethenogenes (strain 195)).